The following is a 61-amino-acid chain: Large ribosomal subunit protein bL28 (61 aa).

A disordered region spans residues 1 to 27 (MAKDFVTGKKTTFGNTRSHALNSSSRS). The span at 9-27 (KKTTFGNTRSHALNSSSRS) shows a compositional bias: polar residues.

It belongs to the bacterial ribosomal protein bL28 family.

This is Large ribosomal subunit protein bL28 from Lactobacillus delbrueckii subsp. bulgaricus (strain ATCC 11842 / DSM 20081 / BCRC 10696 / JCM 1002 / NBRC 13953 / NCIMB 11778 / NCTC 12712 / WDCM 00102 / Lb 14).